The primary structure comprises 419 residues: Transcription termination factor Rho (419 aa).

The Rho RNA-BD domain maps to 48–123; that stretch reads DIFGDGVLEI…LKVNAVNYDK (76 aa). RNA-binding regions lie at residues 61–66, 78–80, and 108–110; these read GFGFLR, DIY, and ERY. ATP contacts are provided by residues 169-174, 181-186, and R212; these read GRGQRG and KAGKTI. The RNA-binding 2 stretch occupies residues 284-288; it reads VLTGG.

It belongs to the Rho family. Homohexamer. The homohexamer assembles into an open ring structure.

Functionally, facilitates transcription termination by a mechanism that involves Rho binding to the nascent RNA, activation of Rho's RNA-dependent ATPase activity, and release of the mRNA from the DNA template. In Buchnera aphidicola subsp. Schizaphis graminum (strain Sg), this protein is Transcription termination factor Rho.